The following is a 197-amino-acid chain: Dehydrin DHN1 (197 aa).

The segment covering 1–14 has biased composition (polar residues); the sequence is MSQYQNQYGAQTGM. Disordered stretches follow at residues 1 to 86 and 133 to 197; these read MSQY…GTNP and GTEQ…CTGH. Tandem repeats lie at residues 16–21 and 26–31. The interval 16-31 is 2 X approximate repeats; it reads DEYGNPVNQVDQYGNP. Over residues 74 to 83 the composition is skewed to gly residues; the sequence is THTGGVGGYG. A 2-1 repeat occupies 126–133; sequence KIKEKIPG. A 2 X approximate repeats region spans residues 126–190; it reads KIKEKIPGTE…MDKIKEKLPG (65 aa). Gly residues predominate over residues 144 to 160; it reads AGYGSTGYGASGGGIGN. Over residues 165–188 the composition is skewed to basic and acidic residues; that stretch reads YVREEHRVDHGEKKGIMDKIKEKL. The stretch at 183–190 is one 2-2 repeat; the sequence is KIKEKLPG.

This sequence belongs to the plant dehydrin family. Shoots, roots, and cotyledon from dehydrating seedlings.

The chain is Dehydrin DHN1 (DHN1) from Pisum sativum (Garden pea).